The following is a 37-amino-acid chain: Large ribosomal subunit protein bL36c (37 aa).

This sequence belongs to the bacterial ribosomal protein bL36 family.

It is found in the plastid. The protein localises to the chloroplast. This is Large ribosomal subunit protein bL36c from Tupiella akineta (Green alga).